We begin with the raw amino-acid sequence, 219 residues long: Ribose-5-phosphate isomerase A (219 aa).

Substrate contacts are provided by residues 28-31, 81-84, and 94-97; these read SGST, DGAD, and KGGG. The active-site Proton acceptor is Glu-103. Position 121 (Lys-121) interacts with substrate.

Belongs to the ribose 5-phosphate isomerase family. As to quaternary structure, homodimer.

It catalyses the reaction aldehydo-D-ribose 5-phosphate = D-ribulose 5-phosphate. It functions in the pathway carbohydrate degradation; pentose phosphate pathway; D-ribose 5-phosphate from D-ribulose 5-phosphate (non-oxidative stage): step 1/1. Functionally, catalyzes the reversible conversion of ribose-5-phosphate to ribulose 5-phosphate. This Haemophilus ducreyi (strain 35000HP / ATCC 700724) protein is Ribose-5-phosphate isomerase A.